A 41-amino-acid polypeptide reads, in one-letter code: Virescein (41 aa).

A Histidine amide modification is found at His41.

Monomer. Hemolymph.

It localises to the secreted. Its function is as follows. Has antibacterial activity against Gram-positive and Gram-negative bacteria. This is Virescein from Heliothis virescens (Tobacco budworm moth).